Consider the following 288-residue polypeptide: Fructose-bisphosphate aldolase (288 aa).

S49 is a D-glyceraldehyde 3-phosphate binding site. The active-site Proton donor is D84. Residues H85, D105, E135, and H177 each coordinate Zn(2+). Dihydroxyacetone phosphate is bound at residue G178. H206 serves as a coordination point for Zn(2+). Dihydroxyacetone phosphate is bound by residues 207–209 (GGS) and 228–231 (NINT).

This sequence belongs to the class II fructose-bisphosphate aldolase family. In terms of assembly, homodimer. Zn(2+) is required as a cofactor.

The enzyme catalyses beta-D-fructose 1,6-bisphosphate = D-glyceraldehyde 3-phosphate + dihydroxyacetone phosphate. The protein operates within carbohydrate degradation; glycolysis; D-glyceraldehyde 3-phosphate and glycerone phosphate from D-glucose: step 4/4. Functionally, catalyzes the aldol condensation of dihydroxyacetone phosphate (DHAP or glycerone-phosphate) with glyceraldehyde 3-phosphate (G3P) to form fructose 1,6-bisphosphate (FBP) in gluconeogenesis and the reverse reaction in glycolysis. This is Fructose-bisphosphate aldolase (fba) from Mycoplasma pneumoniae (strain ATCC 29342 / M129 / Subtype 1) (Mycoplasmoides pneumoniae).